The chain runs to 342 residues: Dihydroorotase (342 aa).

Positions 13 and 15 each coordinate Zn(2+). Residues 15–17 and Asn-41 each bind substrate; that span reads HLR. Positions 98, 135, and 173 each coordinate Zn(2+). N6-carboxylysine is present on Lys-98. His-135 is a binding site for substrate. Position 218 (Leu-218) interacts with substrate. Residue Asp-246 coordinates Zn(2+). Residue Asp-246 is part of the active site. 2 residues coordinate substrate: His-250 and Ala-262.

The protein belongs to the metallo-dependent hydrolases superfamily. DHOase family. Class II DHOase subfamily. Homodimer. The cofactor is Zn(2+).

The enzyme catalyses (S)-dihydroorotate + H2O = N-carbamoyl-L-aspartate + H(+). Its pathway is pyrimidine metabolism; UMP biosynthesis via de novo pathway; (S)-dihydroorotate from bicarbonate: step 3/3. In terms of biological role, catalyzes the reversible cyclization of carbamoyl aspartate to dihydroorotate. The chain is Dihydroorotase from Aliivibrio fischeri (strain ATCC 700601 / ES114) (Vibrio fischeri).